The sequence spans 352 residues: uncharacterized protein (352 aa).

It to M.pneumoniae MPN_633 (in the N-terminal section), and M.pneumoniae MPN_634 (in the C-terminal section).

This is an uncharacterized protein from Mycoplasma pneumoniae (strain ATCC 29342 / M129 / Subtype 1) (Mycoplasmoides pneumoniae).